Here is an 88-residue protein sequence, read N- to C-terminus: Small ribosomal subunit protein bS16 (88 aa).

It belongs to the bacterial ribosomal protein bS16 family.

This Geobacter sp. (strain M21) protein is Small ribosomal subunit protein bS16.